A 337-amino-acid polypeptide reads, in one-letter code: Tetraacyldisaccharide 4'-kinase (337 aa).

51–58 (HLGGAGKT) is a binding site for ATP.

Belongs to the LpxK family.

It carries out the reaction a lipid A disaccharide + ATP = a lipid IVA + ADP + H(+). Its pathway is glycolipid biosynthesis; lipid IV(A) biosynthesis; lipid IV(A) from (3R)-3-hydroxytetradecanoyl-[acyl-carrier-protein] and UDP-N-acetyl-alpha-D-glucosamine: step 6/6. Functionally, transfers the gamma-phosphate of ATP to the 4'-position of a tetraacyldisaccharide 1-phosphate intermediate (termed DS-1-P) to form tetraacyldisaccharide 1,4'-bis-phosphate (lipid IVA). The sequence is that of Tetraacyldisaccharide 4'-kinase from Nitrobacter winogradskyi (strain ATCC 25391 / DSM 10237 / CIP 104748 / NCIMB 11846 / Nb-255).